The following is an 89-amino-acid chain: Mitochondrial import inner membrane translocase subunit Tim9 (89 aa).

Ala2 carries the post-translational modification N-acetylalanine. Residues 28–52 carry the Twin CX3C motif motif; that stretch reads CFLDCVKDFTTREVKPEETTCSEHC. Disulfide bonds link Cys28-Cys52 and Cys32-Cys48.

This sequence belongs to the small Tim family. In terms of assembly, heterohexamer; composed of 3 copies of TIMM9 and 3 copies of TIMM10/TIM10A, named soluble 70 kDa complex. The complex forms a 6-bladed alpha-propeller structure and associates with the TIMM22 component of the TIM22 complex. Interacts with multi-pass transmembrane proteins in transit. Also forms a complex composed of TIMM9, TIMM10/TIM10A and FXC1/TIM10B. Ubiquitous, with highest expression in heart, kidney, liver and skeletal muscle.

The protein localises to the mitochondrion inner membrane. In terms of biological role, mitochondrial intermembrane chaperone that participates in the import and insertion of multi-pass transmembrane proteins into the mitochondrial inner membrane. May also be required for the transfer of beta-barrel precursors from the TOM complex to the sorting and assembly machinery (SAM complex) of the outer membrane. Acts as a chaperone-like protein that protects the hydrophobic precursors from aggregation and guide them through the mitochondrial intermembrane space. This Homo sapiens (Human) protein is Mitochondrial import inner membrane translocase subunit Tim9 (TIMM9).